Here is a 223-residue protein sequence, read N- to C-terminus: V-type ATP synthase subunit D (223 aa).

Residues 203 to 223 are disordered; it reads AREAEEEGGRPNPQVEIGAGL.

This sequence belongs to the V-ATPase D subunit family.

Produces ATP from ADP in the presence of a proton gradient across the membrane. In Thermus thermophilus (strain ATCC BAA-163 / DSM 7039 / HB27), this protein is V-type ATP synthase subunit D.